Here is a 416-residue protein sequence, read N- to C-terminus: PTS system N-acetylglucosamine-specific EIIC component (416 aa).

One can recognise a PTS EIIC type-1 domain in the interval Ser-16–Pro-406. 10 consecutive transmembrane segments (helical) span residues Ala-68–Phe-88, Thr-96–Val-116, Thr-130–Trp-150, Leu-170–Trp-190, Gly-196–Gly-216, Ile-266–Met-286, Val-298–Ile-318, Met-323–Ile-343, Thr-344–Leu-364, and Ile-375–Val-395.

The protein localises to the cell membrane. In terms of biological role, the phosphoenolpyruvate-dependent sugar phosphotransferase system (sugar PTS), a major carbohydrate active transport system, catalyzes the phosphorylation of incoming sugar substrates concomitantly with their translocation across the cell membrane. This system is involved in N-acetylglucosamine (GlcNAc) transport. High-affinity permease, which exhibits a narrow specificity for GlcNAc. Essential for C-signaling between vegetative growth and development. This Streptomyces coelicolor (strain ATCC BAA-471 / A3(2) / M145) protein is PTS system N-acetylglucosamine-specific EIIC component.